The chain runs to 87 residues: Small ribosomal subunit protein uS17 (87 aa).

The protein belongs to the universal ribosomal protein uS17 family. As to quaternary structure, part of the 30S ribosomal subunit.

One of the primary rRNA binding proteins, it binds specifically to the 5'-end of 16S ribosomal RNA. This Lacticaseibacillus casei (strain BL23) (Lactobacillus casei) protein is Small ribosomal subunit protein uS17.